The primary structure comprises 197 residues: uncharacterized protein (197 aa).

The next 6 membrane-spanning stretches (helical) occupy residues 5–23 (LNLL…GLRF), 27–46 (ISFA…MLRF), 55–77 (VIAG…LAYT), 87–109 (LSLL…VIRI), 116–138 (VFAF…LPTG), and 153–174 (FVEF…CLVF).

It localises to the cell membrane. This is an uncharacterized protein from Archaeoglobus fulgidus (strain ATCC 49558 / DSM 4304 / JCM 9628 / NBRC 100126 / VC-16).